The following is a 68-amino-acid chain: MRTSYLLLFILCLVLCDMDSGDTFLTGLGHRSDHYNCVKGGGQCLYSACPIYTKVQGTCYGGKAKCCK.

Residues 1-21 (MRTSYLLLFILCLVLCDMDSG) form the signal peptide. Positions 22-32 (DTFLTGLGHRS) are excised as a propeptide. 3 disulfides stabilise this stretch: cysteine 37–cysteine 66, cysteine 44–cysteine 59, and cysteine 49–cysteine 67.

Belongs to the beta-defensin family. In terms of assembly, monomer. Homodimer.

It localises to the secreted. The protein resides in the membrane. Its function is as follows. Has bactericidal activity. May act as a ligand for C-C chemokine receptor CCR6. Positively regulates the sperm motility and bactericidal activity in a CCR6-dependent manner. Binds to CCR6 and triggers Ca2+ mobilization in the sperm which is important for its motility. This Saguinus oedipus (Cotton-top tamarin) protein is Beta-defensin 1 (DEFB1).